The following is a 504-amino-acid chain: Maturase K (504 aa).

The protein belongs to the intron maturase 2 family. MatK subfamily.

It localises to the plastid. Its subcellular location is the chloroplast. Functionally, usually encoded in the trnK tRNA gene intron. Probably assists in splicing its own and other chloroplast group II introns. This chain is Maturase K, found in Turritis glabra (Tower mustard).